The sequence spans 345 residues: Tropomodulin-4 (345 aa).

The segment at 42–63 is disordered; the sequence is NMLLPAGLRQRDQTKKSPTGPL.

It belongs to the tropomodulin family. Binds to the N-terminus of tropomyosin and to actin.

The protein resides in the cytoplasm. Its subcellular location is the cytoskeleton. Blocks the elongation and depolymerization of the actin filaments at the pointed end. The Tmod/TM complex contributes to the formation of the short actin protofilament, which in turn defines the geometry of the membrane skeleton. The polypeptide is Tropomodulin-4 (TMOD4) (Bos taurus (Bovine)).